Reading from the N-terminus, the 234-residue chain is Large ribosomal subunit protein uL1 (234 aa).

The protein belongs to the universal ribosomal protein uL1 family. In terms of assembly, part of the 50S ribosomal subunit.

Binds directly to 23S rRNA. The L1 stalk is quite mobile in the ribosome, and is involved in E site tRNA release. In terms of biological role, protein L1 is also a translational repressor protein, it controls the translation of the L11 operon by binding to its mRNA. This chain is Large ribosomal subunit protein uL1, found in Cronobacter sakazakii (strain ATCC BAA-894) (Enterobacter sakazakii).